Consider the following 47-residue polypeptide: Sperm protamine P1 (47 aa).

It belongs to the protamine P1 family. In terms of tissue distribution, testis.

The protein resides in the nucleus. Its subcellular location is the chromosome. Its function is as follows. Protamines substitute for histones in the chromatin of sperm during the haploid phase of spermatogenesis. They compact sperm DNA into a highly condensed, stable and inactive complex. This Orcinus orca (Killer whale) protein is Sperm protamine P1 (PRM1).